The chain runs to 300 residues: CDP-diacylglycerol--serine O-phosphatidyltransferase (300 aa).

6 consecutive transmembrane segments (helical) span residues 10 to 30 (AVNL…AGLT), 74 to 94 (IDSL…LYAT), 95 to 115 (MLST…CVVL), 135 to 155 (EFFV…LLAL), 162 to 182 (GWWT…MLLI), and 207 to 227 (LAIF…VIIL).

Belongs to the CDP-alcohol phosphatidyltransferase class-I family.

Its subcellular location is the cell membrane. It catalyses the reaction a CDP-1,2-diacyl-sn-glycerol + L-serine = a 1,2-diacyl-sn-glycero-3-phospho-L-serine + CMP + H(+). The protein is CDP-diacylglycerol--serine O-phosphatidyltransferase (pssA) of Mycobacterium leprae (strain TN).